The sequence spans 426 residues: UDP-N-acetylglucosamine 1-carboxyvinyltransferase (426 aa).

22 to 23 lines the phosphoenolpyruvate pocket; it reads KN. Arg-94 is a UDP-N-acetyl-alpha-D-glucosamine binding site. Residue Cys-118 is the Proton donor of the active site. Residue Cys-118 is modified to 2-(S-cysteinyl)pyruvic acid O-phosphothioketal. UDP-N-acetyl-alpha-D-glucosamine-binding positions include 123–127, Asp-309, and Ile-331; that span reads RPVDL.

Belongs to the EPSP synthase family. MurA subfamily.

Its subcellular location is the cytoplasm. It catalyses the reaction phosphoenolpyruvate + UDP-N-acetyl-alpha-D-glucosamine = UDP-N-acetyl-3-O-(1-carboxyvinyl)-alpha-D-glucosamine + phosphate. It functions in the pathway cell wall biogenesis; peptidoglycan biosynthesis. In terms of biological role, cell wall formation. Adds enolpyruvyl to UDP-N-acetylglucosamine. The protein is UDP-N-acetylglucosamine 1-carboxyvinyltransferase of Paracoccus denitrificans (strain Pd 1222).